The chain runs to 117 residues: uncharacterized protein (117 aa).

It is found in the cytoplasm. Its subcellular location is the nucleus. This is an uncharacterized protein from Saccharomyces cerevisiae (strain ATCC 204508 / S288c) (Baker's yeast).